Reading from the N-terminus, the 398-residue chain is Succinate--CoA ligase [ADP-forming] subunit beta (398 aa).

One can recognise an ATP-grasp domain in the interval 9–254; sequence KRLLHTYGAP…LTEEDPKEIE (246 aa). Residues K46, 53–55, E109, A112, and E117 contribute to the ATP site; that span reads GRG. Residues N209 and D223 each coordinate Mg(2+). Residues N274 and 331–333 each bind substrate; that span reads GIM.

The protein belongs to the succinate/malate CoA ligase beta subunit family. As to quaternary structure, heterotetramer of two alpha and two beta subunits. Requires Mg(2+) as cofactor.

The enzyme catalyses succinate + ATP + CoA = succinyl-CoA + ADP + phosphate. It carries out the reaction GTP + succinate + CoA = succinyl-CoA + GDP + phosphate. The protein operates within carbohydrate metabolism; tricarboxylic acid cycle; succinate from succinyl-CoA (ligase route): step 1/1. Its function is as follows. Succinyl-CoA synthetase functions in the citric acid cycle (TCA), coupling the hydrolysis of succinyl-CoA to the synthesis of either ATP or GTP and thus represents the only step of substrate-level phosphorylation in the TCA. The beta subunit provides nucleotide specificity of the enzyme and binds the substrate succinate, while the binding sites for coenzyme A and phosphate are found in the alpha subunit. This chain is Succinate--CoA ligase [ADP-forming] subunit beta, found in Brucella abortus (strain S19).